A 435-amino-acid polypeptide reads, in one-letter code: Tol-Pal system protein TolB (435 aa).

A signal peptide spans 1 to 28; it reads MVKCSLIRALMVIAGLIGAAAFTTPANA. The disordered stretch occupies residues 288–310; sequence STAAIDTSPSYSPDGARVSFESD.

It belongs to the TolB family. In terms of assembly, the Tol-Pal system is composed of five core proteins: the inner membrane proteins TolA, TolQ and TolR, the periplasmic protein TolB and the outer membrane protein Pal. They form a network linking the inner and outer membranes and the peptidoglycan layer.

Its subcellular location is the periplasm. In terms of biological role, part of the Tol-Pal system, which plays a role in outer membrane invagination during cell division and is important for maintaining outer membrane integrity. This chain is Tol-Pal system protein TolB, found in Rhizobium leguminosarum bv. trifolii (strain WSM2304).